We begin with the raw amino-acid sequence, 86 residues long: MAHKKGVGSSKNGRESESKRLGVKIYGGQAAIAGNIIVRQRGSKHNPGENVYISKDHTLHARVAGVVKFQKKRDNKSYVSIIPFEA.

This sequence belongs to the bacterial ribosomal protein bL27 family.

The protein is Large ribosomal subunit protein bL27 of Flavobacterium johnsoniae (strain ATCC 17061 / DSM 2064 / JCM 8514 / BCRC 14874 / CCUG 350202 / NBRC 14942 / NCIMB 11054 / UW101) (Cytophaga johnsonae).